Here is a 181-residue protein sequence, read N- to C-terminus: Adenine phosphoribosyltransferase (181 aa).

Belongs to the purine/pyrimidine phosphoribosyltransferase family. As to quaternary structure, homodimer.

It localises to the cytoplasm. The enzyme catalyses AMP + diphosphate = 5-phospho-alpha-D-ribose 1-diphosphate + adenine. It participates in purine metabolism; AMP biosynthesis via salvage pathway; AMP from adenine: step 1/1. Its function is as follows. Catalyzes a salvage reaction resulting in the formation of AMP, that is energically less costly than de novo synthesis. This Psychromonas ingrahamii (strain DSM 17664 / CCUG 51855 / 37) protein is Adenine phosphoribosyltransferase.